The primary structure comprises 291 residues: N-acetylmannosamine kinase (291 aa).

ATP-binding positions include 5–12 (AIDIGGTK) and 132–139 (GVGGGVVS). Residues histidine 156, cysteine 166, cysteine 168, and cysteine 173 each contribute to the Zn(2+) site.

The protein belongs to the ROK (NagC/XylR) family. NanK subfamily. Homodimer.

The catalysed reaction is an N-acyl-D-mannosamine + ATP = an N-acyl-D-mannosamine 6-phosphate + ADP + H(+). It functions in the pathway amino-sugar metabolism; N-acetylneuraminate degradation; D-fructose 6-phosphate from N-acetylneuraminate: step 2/5. Catalyzes the phosphorylation of N-acetylmannosamine (ManNAc) to ManNAc-6-P. This Escherichia coli O127:H6 (strain E2348/69 / EPEC) protein is N-acetylmannosamine kinase.